The primary structure comprises 166 residues: Phosphopantetheine adenylyltransferase (166 aa).

Serine 11 is a substrate binding site. ATP-binding positions include 11 to 12 (SF) and histidine 19. Residues lysine 43, leucine 75, and arginine 89 each contribute to the substrate site. ATP contacts are provided by residues 90 to 92 (GLR), glutamate 100, and 125 to 131 (YGYLSSS).

This sequence belongs to the bacterial CoaD family. As to quaternary structure, homohexamer. The cofactor is Mg(2+).

The protein resides in the cytoplasm. It catalyses the reaction (R)-4'-phosphopantetheine + ATP + H(+) = 3'-dephospho-CoA + diphosphate. The protein operates within cofactor biosynthesis; coenzyme A biosynthesis; CoA from (R)-pantothenate: step 4/5. Its function is as follows. Reversibly transfers an adenylyl group from ATP to 4'-phosphopantetheine, yielding dephospho-CoA (dPCoA) and pyrophosphate. The protein is Phosphopantetheine adenylyltransferase of Syntrophotalea carbinolica (strain DSM 2380 / NBRC 103641 / GraBd1) (Pelobacter carbinolicus).